The chain runs to 99 residues: Protein adenylyltransferase MntA (99 aa).

The short motif at 33–47 is the GSX(10)DXD motif element; the sequence is GSYVRGEAKEDSDVD. Active-site residues include Asp-45 and Asp-47. The Mg(2+) site is built by Asp-45, Asp-47, and Asp-77.

This sequence belongs to the MntA antitoxin family. Mg(2+) serves as cofactor.

It carries out the reaction L-tyrosyl-[protein] + ATP = O-(5'-adenylyl)-L-tyrosyl-[protein] + diphosphate. It catalyses the reaction O-(5'-adenylyl)-L-tyrosyl-[protein] + ATP = O-[5'-(adenylyl-(5'-&gt;3')-adenylyl)]-L-tyrosyl-[protein] + diphosphate. Functionally, antitoxin component of a type VII toxin-antitoxin (TA) system. Overexpression in E.coli neutralizes the toxic effect of cognate toxin HepT. Neutralization is mostly due to AMPylation of the toxin by this enzyme. The sequence is that of Protein adenylyltransferase MntA from Thermococcus cleftensis (strain DSM 27260 / KACC 17922 / CL1).